Reading from the N-terminus, the 81-residue chain is Sulfur carrier protein TusA (81 aa).

The active-site Cysteine persulfide intermediate is the cysteine 20.

This sequence belongs to the sulfur carrier protein TusA family.

The protein resides in the cytoplasm. Functionally, sulfur carrier protein which probably makes part of a sulfur-relay system. The sequence is that of Sulfur carrier protein TusA from Colwellia psychrerythraea (strain 34H / ATCC BAA-681) (Vibrio psychroerythus).